The primary structure comprises 1940 residues: Rho GTPase-activating protein 32 (1940 aa).

One can recognise a PX; atypical domain in the interval 154–248; that stretch reads SKELVFLVQI…LTWMEIDNKG (95 aa). Residues 262-324 form the SH3 domain; sequence PAIAAAHVIK…PSECVELIND (63 aa). In terms of domain architecture, Rho-GAP spans 375 to 570; it reads CDLGEHLLNS…FILNHVEVLF (196 aa). Disordered regions lie at residues 646-746, 1035-1163, 1219-1264, 1430-1454, and 1675-1786; these read FPSE…LSAS, RANQ…FSVT, FTTG…PPVR, KHPR…YTED, and RSRS…HSSA. A compositionally biased stretch (polar residues) spans 1047-1061; it reads PQGASASESPQELSH. 2 stretches are compositionally biased toward low complexity: residues 1081-1094 and 1145-1163; these read LALA…QASA and SRKT…FSVT. Basic and acidic residues predominate over residues 1691 to 1707; it reads ETKDVRYPGRTEGDERT. The span at 1725–1734 shows a compositional bias: polar residues; it reads PQKQSGSSRS. A compositionally biased stretch (basic and acidic residues) spans 1736 to 1755; sequence MQHDISTEQHSQDTLHRQPS.

The protein belongs to the PX domain-containing GAP family.

It is found in the cytoplasm. It localises to the membrane. The protein localises to the cell membrane. GTPase-activating protein (GAP) promoting GTP hydrolysis on RHOA, CDC42 and RAC1 small GTPases. The chain is Rho GTPase-activating protein 32 (arhgap32) from Xenopus laevis (African clawed frog).